The chain runs to 231 residues: Beta-casein (231 aa).

The signal sequence occupies residues 1 to 15; that stretch reads MKVFILACLVALALA. The residue at position 24 (Ser-24) is a Phosphoserine. Thr-27 carries the phosphothreonine modification. Ser-29, Ser-31, and Ser-32 each carry phosphoserine.

It belongs to the beta-casein family. As to expression, mammary gland specific. Secreted in milk.

It localises to the secreted. Functionally, important role in determination of the surface properties of the casein micelles. This is Beta-casein (Csn2) from Rattus norvegicus (Rat).